Consider the following 305-residue polypeptide: D-alanine--D-alanine ligase (305 aa).

Positions 99-300 (KLFFEKAGIR…YEEMIQTFVN (202 aa)) constitute an ATP-grasp domain. Residue 126 to 181 (NFTGTYPVVVKPNQEGSTIGLTVAETEEELLQGIEEAFRHDDTILIEEFIAGTEVT) participates in ATP binding.

It belongs to the D-alanine--D-alanine ligase family.

The protein resides in the cytoplasm. The enzyme catalyses 2 D-alanine + ATP = D-alanyl-D-alanine + ADP + phosphate + H(+). It participates in cell wall biogenesis; peptidoglycan biosynthesis. In terms of biological role, cell wall formation. The polypeptide is D-alanine--D-alanine ligase (Halalkalibacterium halodurans (strain ATCC BAA-125 / DSM 18197 / FERM 7344 / JCM 9153 / C-125) (Bacillus halodurans)).